The sequence spans 489 residues: Glycogen synthase (489 aa).

K18 lines the ADP-alpha-D-glucose pocket.

It belongs to the glycosyltransferase 1 family. Bacterial/plant glycogen synthase subfamily.

It catalyses the reaction [(1-&gt;4)-alpha-D-glucosyl](n) + ADP-alpha-D-glucose = [(1-&gt;4)-alpha-D-glucosyl](n+1) + ADP + H(+). It participates in glycan biosynthesis; glycogen biosynthesis. Its function is as follows. Synthesizes alpha-1,4-glucan chains using ADP-glucose. The sequence is that of Glycogen synthase from Rhodopseudomonas palustris (strain BisB18).